The sequence spans 463 residues: Cysteine--tRNA ligase (463 aa).

C33 serves as a coordination point for Zn(2+). Positions 35–45 (PTVYDFAHIGN) match the 'HIGH' region motif. The Zn(2+) site is built by C221, H246, and E250. Residues 279-283 (KMSKS) carry the 'KMSKS' region motif. Residue K282 participates in ATP binding.

The protein belongs to the class-I aminoacyl-tRNA synthetase family. Monomer. Zn(2+) is required as a cofactor.

It is found in the cytoplasm. It carries out the reaction tRNA(Cys) + L-cysteine + ATP = L-cysteinyl-tRNA(Cys) + AMP + diphosphate. The chain is Cysteine--tRNA ligase from Rhizobium johnstonii (strain DSM 114642 / LMG 32736 / 3841) (Rhizobium leguminosarum bv. viciae).